Here is a 226-residue protein sequence, read N- to C-terminus: Enolase-phosphatase E1 (226 aa).

This sequence belongs to the HAD-like hydrolase superfamily. MasA/MtnC family. As to quaternary structure, monomer. The cofactor is Mg(2+).

The enzyme catalyses 5-methylsulfanyl-2,3-dioxopentyl phosphate + H2O = 1,2-dihydroxy-5-(methylsulfanyl)pent-1-en-3-one + phosphate. The protein operates within amino-acid biosynthesis; L-methionine biosynthesis via salvage pathway; L-methionine from S-methyl-5-thio-alpha-D-ribose 1-phosphate: step 3/6. It functions in the pathway amino-acid biosynthesis; L-methionine biosynthesis via salvage pathway; L-methionine from S-methyl-5-thio-alpha-D-ribose 1-phosphate: step 4/6. Bifunctional enzyme that catalyzes the enolization of 2,3-diketo-5-methylthiopentyl-1-phosphate (DK-MTP-1-P) into the intermediate 2-hydroxy-3-keto-5-methylthiopentenyl-1-phosphate (HK-MTPenyl-1-P), which is then dephosphorylated to form the acireductone 1,2-dihydroxy-3-keto-5-methylthiopentene (DHK-MTPene). The chain is Enolase-phosphatase E1 from Shewanella putrefaciens (strain CN-32 / ATCC BAA-453).